Consider the following 428-residue polypeptide: Serine--tRNA ligase (428 aa).

L-serine is bound at residue 231–233 (TSE). ATP contacts are provided by residues 262-264 (RRE) and Val-278. Glu-285 contributes to the L-serine binding site. 349 to 352 (ELTS) provides a ligand contact to ATP. Thr-384 is a binding site for L-serine.

The protein belongs to the class-II aminoacyl-tRNA synthetase family. Type-1 seryl-tRNA synthetase subfamily. Homodimer. The tRNA molecule binds across the dimer.

The protein localises to the cytoplasm. It catalyses the reaction tRNA(Ser) + L-serine + ATP = L-seryl-tRNA(Ser) + AMP + diphosphate + H(+). The enzyme catalyses tRNA(Sec) + L-serine + ATP = L-seryl-tRNA(Sec) + AMP + diphosphate + H(+). It functions in the pathway aminoacyl-tRNA biosynthesis; selenocysteinyl-tRNA(Sec) biosynthesis; L-seryl-tRNA(Sec) from L-serine and tRNA(Sec): step 1/1. In terms of biological role, catalyzes the attachment of serine to tRNA(Ser). Is also able to aminoacylate tRNA(Sec) with serine, to form the misacylated tRNA L-seryl-tRNA(Sec), which will be further converted into selenocysteinyl-tRNA(Sec). The chain is Serine--tRNA ligase from Bifidobacterium longum (strain DJO10A).